The sequence spans 984 residues: Zinc finger and BTB domain-containing protein 4 (984 aa).

One can recognise a BTB domain in the interval 30–131 (CDVTLIAGDT…IYSARLALPG (102 aa)). K40 participates in a covalent cross-link: Glycyl lysine isopeptide (Lys-Gly) (interchain with G-Cter in SUMO2). 3 disordered regions span residues 71–104 (TGGS…PPRV), 172–210 (MVTS…RRPF), and 227–262 (THEA…ASAL). Positions 74 to 88 (SAPSPATTTAASSSS) are enriched in low complexity. The interval 165 to 324 (VPPAPSSMVT…CRYCEKVFAL (160 aa)) is interaction with CBFA2T3. The C2H2-type 1; atypical zinc finger occupies 210–232 (FPCPRCGKSFIHPKRLQTHEAQC). A compositionally biased stretch (gly residues) spans 242–255 (AGLGPGGSGPGGPA). C2H2-type zinc fingers lie at residues 285–307 (YVCA…SNVH), 313–335 (YPCR…EVWH), and 341–364 (YQCI…RAFH). S367 carries the phosphoserine modification. A disordered region spans residues 461 to 575 (GSSSSGAAGG…GSSQLQAPPP (115 aa)). Residues 467 to 477 (AAGGGPVGTGG) are compositionally biased toward gly residues. Low complexity-rich tracts occupy residues 478–488 (SQAASVITYTT) and 507–529 (ATPT…ATAT). K548 participates in a covalent cross-link: Glycyl lysine isopeptide (Lys-Gly) (interchain with G-Cter in SUMO2). A compositionally biased stretch (gly residues) spans 552-565 (GVSGSGGSPTGTGR). A Glycyl lysine isopeptide (Lys-Gly) (interchain with G-Cter in SUMO2) cross-link involves residue K590. 5 disordered regions span residues 593–696 (ISET…GERR), 713–734 (RKHQ…RSST), 756–836 (QRHA…VAGG), 853–876 (GGSR…ASEG), and 947–984 (QTAP…GDVG). Over residues 604–627 (SGEEVEESEEEEEEEEEEDQEDQE) the composition is skewed to acidic residues. Over residues 628-637 (ESKAGGEDQL) the composition is skewed to basic and acidic residues. C2H2-type zinc fingers lie at residues 697 to 719 (HRCG…QEAH) and 736 to 758 (FTCP…GQRH). Phosphothreonine; by HIPK2 occurs at positions 766 and 768. The span at 807–819 (AAAAAAEASESAS) shows a compositional bias: low complexity. The span at 948–966 (TAPPTPPTPPPPLPLPVPP) shows a compositional bias: pro residues. T955 bears the Phosphothreonine; by HIPK2 mark.

In terms of assembly, interacts with HIPK2. Interacts with CBFA2T3. Interacts with ZBTB38. In terms of processing, phosphorylated by HIPK2. This phosphorylation reduces stability and triggers ZBTB4 protein degradation in response to DNA damage.

It is found in the nucleus. Its subcellular location is the chromosome. In terms of biological role, transcriptional repressor with bimodal DNA-binding specificity. Represses transcription in a methyl-CpG-dependent manner. Binds with a higher affinity to methylated CpG dinucleotides in the consensus sequence 5'-CGCG-3' but can also bind to the non-methylated consensus sequence 5'-CTGCNA-3' also known as the consensus kaiso binding site (KBS). Can also bind specifically to a single methyl-CpG pair and can bind hemimethylated DNA but with a lower affinity compared to methylated DNA. Plays a role in postnatal myogenesis, may be involved in the regulation of satellite cells self-renewal. The polypeptide is Zinc finger and BTB domain-containing protein 4 (Zbtb4) (Rattus norvegicus (Rat)).